A 665-amino-acid chain; its full sequence is F-box/WD repeat-containing protein lin-23 (665 aa).

One can recognise an F-box domain in the interval 81–127 (RDFISNLPAHLVELILFNVNSDSLKSCEEVSTSWRCALARGQHWKKL). 7 WD repeats span residues 220-257 (ENSKGVYCLQYDDDKIVSGLRDNTIKIWDRKDYSCSRI), 260-299 (GHTGSVLCLQYDNRVIISGSSDATVRVWDVETGECIKTLI), 301-337 (HCEAVLHLRFANGIMVTCSKDRSIAVWDMVSPRDITI), 343-380 (GHRAAVNVVDFDDRYIVSASGDRTIKVWSMDTLEFVRT), 383-420 (GHRRGIACLQYRGRLVVSGSSDNTIRLWDIHSGVCLRV), 423-460 (GHEELVRCIRFDEKRIVSGAYDGKIKVWDLQAALDPRA), and 472-509 (QHTGRVFRLQFDDFQIVSSSHDDTILIWDFLDAPPSGL). The interval 574-665 (AAAEAARGAG…VDEEMPDGGP (92 aa)) is disordered. Acidic residues-rich tracts occupy residues 584–595 (DNDESSSEEDLD) and 655–665 (DVDEEMPDGGP).

Part of a SCF (SKP1-cullin-F-box) protein ligase complex.

It is found in the cytoplasm. In terms of biological role, functions cell autonomously to negatively regulate cell cycle progression. Required to restrain cell proliferation in response to developmental cues. Probably recognizes and binds to some proteins and promotes their ubiquitination and degradation. This chain is F-box/WD repeat-containing protein lin-23 (lin-23), found in Caenorhabditis elegans.